Consider the following 532-residue polypeptide: Telomerase Cajal body protein 1 (532 aa).

A disordered region spans residues 1 to 48 (MKTSEELRLAPDSLPSDLVPAPVLQASPADKNTDSEPVPPPCGGDDQL). 3 positions are modified to phosphoserine: Ser27, Ser61, and Ser83. The interval 83–115 (SPRIEEQEVPENASLPVEETNRPELESGEAMEG) is disordered. WD repeat units follow at residues 151–190 (RSENFLKGCKWAPDGSCILTNSADNVLRIYNLPPELYSES), 206–251 (EGDT…LRAS), 256–297 (NHLD…RDCE), 307–348 (GQSG…ALLG), 349–389 (GHQG…HLLW), and 395–434 (VTTNQRIYFDLDPSGQFLVSGNTSGVVSVWDISGAFSDCK). Thr474 carries the phosphothreonine modification. Ser476 carries the phosphoserine modification. The disordered stretch occupies residues 505–532 (CGGGPDPSNPDEDQDEKGQGRTEAVGMS).

This sequence belongs to the TCAB1 family. In terms of assembly, component of the telomerase holoenzyme complex composed of one molecule of TERT, one molecule of WRAP53/TCAB1, two molecules of H/ACA ribonucleoprotein complex subunits DKC1, NOP10, NHP2 and GAR1, and a telomerase RNA template component (TERC). The telomerase holoenzyme complex is associated with TEP1, SMG6/EST1A and POT1. Interacts with the chaperonin-containing T-complex (TRiC) complex; which mediates the folding of WRAP53/TCAB1. Interacts with COIL. Interacts with SMN1. Interacts with RNF8. Interacts with histone H2AX. Post-translationally, phosphorylated at Ser-61 by ATM in response to DNA damage, promoting its interaction with histone H2AX and localization to sites of DNA double-strand breaks.

It is found in the nucleus. Its subcellular location is the cajal body. It localises to the chromosome. The protein resides in the telomere. In terms of biological role, RNA chaperone that plays a key role in telomere maintenance and RNA localization to Cajal bodies. Specifically recognizes and binds the Cajal body box (CAB box) present in both small Cajal body RNAs (scaRNAs) and telomerase RNA template component (TERC). Essential component of the telomerase holoenzyme complex, a ribonucleoprotein complex essential for the replication of chromosome termini that elongates telomeres in most eukaryotes. In the telomerase holoenzyme complex, required to stimulate the catalytic activity of the complex. Acts by specifically binding the CAB box of the TERC RNA and controlling the folding of the CR4/CR5 region of the TERC RNA, a critical step for telomerase activity. In addition, also controls telomerase holoenzyme complex localization to Cajal body. During S phase, required for delivery of TERC to telomeres during S phase and for telomerase activity. In addition to its role in telomere maintenance, also required for Cajal body formation, probably by mediating localization of scaRNAs to Cajal bodies. Also plays a role in DNA repair: phosphorylated by ATM in response to DNA damage and relocalizes to sites of DNA double-strand breaks to promote the repair of DNA double-strand breaks. Acts by recruiting the ubiquitin ligase RNF8 to DNA breaks and promote both homologous recombination (HR) and non-homologous end joining (NHEJ). The sequence is that of Telomerase Cajal body protein 1 from Rattus norvegicus (Rat).